Here is a 283-residue protein sequence, read N- to C-terminus: Acetylglutamate kinase (283 aa).

Residues 63–64, Arg-85, and Asn-179 each bind substrate; that span reads GG.

It belongs to the acetylglutamate kinase family. ArgB subfamily.

The protein resides in the cytoplasm. The enzyme catalyses N-acetyl-L-glutamate + ATP = N-acetyl-L-glutamyl 5-phosphate + ADP. Its pathway is amino-acid biosynthesis; L-arginine biosynthesis; N(2)-acetyl-L-ornithine from L-glutamate: step 2/4. Functionally, catalyzes the ATP-dependent phosphorylation of N-acetyl-L-glutamate. The sequence is that of Acetylglutamate kinase from Clostridium kluyveri (strain NBRC 12016).